Here is a 1244-residue protein sequence, read N- to C-terminus: SWI/SNF chromatin remodeling complex subunit swsn-7 (1244 aa).

The ARID domain occupies 24-116 (QRKMAEFYNS…YLSKFEQVET (93 aa)). Residues 486-496 (FTQGSNQQQNP) show a composition bias toward polar residues. Disordered stretches follow at residues 486 to 534 (FTQG…GAAP), 556 to 583 (NREQYSTQSSQPHPPHTNVPPSPSILAH), and 597 to 619 (DRRTGNLPVRPIAPSTNSGESQL). Residues 497–508 (HHSQGGHQLGHS) show a composition bias toward low complexity. The segment covering 556–566 (NREQYSTQSSQ) has biased composition (polar residues). Residues 567–578 (PHPPHTNVPPSP) show a composition bias toward pro residues. The span at 610 to 619 (PSTNSGESQL) shows a compositional bias: polar residues. The RFX-type winged-helix DNA-binding region spans 623–697 (TEKWIRQNCV…IVAQGIRLIR (75 aa)). Residues 1134-1244 (EEEQQKMLSE…TTPVRAGAGI (111 aa)) form a disordered region. Positions 1142-1158 (SEVPSSASLSSMAGSSS) are enriched in low complexity. Composition is skewed to polar residues over residues 1159-1186 (QLPTVPDSPTSSVASAPMKESTSVSNKP) and 1194-1212 (LNFSSLNEKTPTSPQFTAG). The span at 1220–1231 (PIQQHIPSQPSP) shows a compositional bias: low complexity.

As to quaternary structure, component of the SWI/SNF-B (PBAF) chromatin remodeling complex.

The protein resides in the nucleus. Its function is as follows. Involved in transcriptional activation and repression of select genes by chromatin remodeling (alteration of DNA-nucleosome topology). Required for the stability of the SWI/SNF chromatin remodeling complex SWI/SNF-B (PBAF). Required for regulation of a stress response gene network, probably as part of the PBAF complex and perhaps acting in concert with histone demethylase jmjc-1. Binds to the ethanol and stress response elements (ESRE) in the promoter regions of hsp-16.1 and hsp-16.2, probably as part of the PBAF complex. This chain is SWI/SNF chromatin remodeling complex subunit swsn-7, found in Caenorhabditis elegans.